A 182-amino-acid chain; its full sequence is Large ribosomal subunit protein bL25 (182 aa).

Belongs to the bacterial ribosomal protein bL25 family. CTC subfamily. Part of the 50S ribosomal subunit; part of the 5S rRNA/L5/L18/L25 subcomplex. Contacts the 5S rRNA. Binds to the 5S rRNA independently of L5 and L18.

Its function is as follows. This is one of the proteins that binds to the 5S RNA in the ribosome where it forms part of the central protuberance. This Borreliella afzelii (strain PKo) (Borrelia afzelii) protein is Large ribosomal subunit protein bL25.